A 643-amino-acid polypeptide reads, in one-letter code: Threonine--tRNA ligase (643 aa).

Residues 1-61 (MIKVSLKDGS…NEDVSLSICT (61 aa)) enclose the TGS domain. The tract at residues 240–540 (DHNKLGRELK…LIEKYAGAFP (301 aa)) is catalytic. Cys-335, His-386, and His-517 together coordinate Zn(2+).

The protein belongs to the class-II aminoacyl-tRNA synthetase family. Homodimer. It depends on Zn(2+) as a cofactor.

Its subcellular location is the cytoplasm. It catalyses the reaction tRNA(Thr) + L-threonine + ATP = L-threonyl-tRNA(Thr) + AMP + diphosphate + H(+). Its function is as follows. Catalyzes the attachment of threonine to tRNA(Thr) in a two-step reaction: L-threonine is first activated by ATP to form Thr-AMP and then transferred to the acceptor end of tRNA(Thr). Also edits incorrectly charged L-seryl-tRNA(Thr). This is Threonine--tRNA ligase from Clostridium botulinum (strain Alaska E43 / Type E3).